The primary structure comprises 406 residues: Probable mannan endo-1,4-beta-mannosidase C (406 aa).

The first 20 residues, 1 to 20 (MLINFEKVLSLALLAGSVSG), serve as a signal peptide directing secretion. Asn58 carries N-linked (GlcNAc...) asparagine glycosylation. A substrate-binding site is contributed by Trp80. Residues Asn86 and Asn114 are each glycosylated (N-linked (GlcNAc...) asparagine). Asn201 lines the substrate pocket. Catalysis depends on Glu202, which acts as the Proton donor. Substrate is bound at residue Tyr287. Glu320 serves as the catalytic Nucleophile. The N-linked (GlcNAc...) asparagine glycan is linked to Asn338. Trp362 contributes to the substrate binding site.

The protein belongs to the glycosyl hydrolase 5 (cellulase A) family.

The protein localises to the secreted. It catalyses the reaction Random hydrolysis of (1-&gt;4)-beta-D-mannosidic linkages in mannans, galactomannans and glucomannans.. In terms of biological role, endo-1,4-mannanase, a crucial enzyme for depolymerization of seed galactomannans and wood galactoglucomannans. The protein is Probable mannan endo-1,4-beta-mannosidase C (manC) of Aspergillus terreus (strain NIH 2624 / FGSC A1156).